We begin with the raw amino-acid sequence, 73 residues long: MISTSSILVLVVLLACFMAASAQWGYGGYGRGYGGYGGYGRGMYGGYGRGMYGGYGRGMYGGYGRGMYGGWGK.

The first 22 residues, 1–22 (MISTSSILVLVVLLACFMAASA), serve as a signal peptide directing secretion. Tyrosine amide is present on residues Tyr29, Tyr39, Tyr47, Tyr55, and Tyr63. Position 71 is a tryptophan amide (Trp71).

This sequence belongs to the YARP (YGGW-amide related peptide) family. As to expression, weakly or not expressed in absence of infection. Upon infection by D.coniospora, it is expressed in hypoderm. Also expressed in perivulval cells when D.coniospora spores adhere to this region. Expressed in hypodermis upon physical injury.

The protein resides in the secreted. Its function is as follows. Antimicrobial peptides that have antibacterial activity against the Gram-negative bacteria S.marcescens. Has antifungal activity against D.coniospora. May play a role in response to physical injury and osmotic stress. Through the neuropeptide receptor nlp-29, induces sleep upon activation of the innate immune response to molting and injury to the adult epidermis. The polypeptide is Neuropeptide-like protein 29 (Caenorhabditis elegans).